The primary structure comprises 440 residues: Putative short-chain fatty acid transporter (440 aa).

The Periplasmic portion of the chain corresponds to 1-19 (MIGRISRFMTRFVSRWLPD). Residues 20-40 (PLIFAMLLTLLTFVIALWLTP) form a helical membrane-spanning segment. The Cytoplasmic portion of the chain corresponds to 41–53 (QTPISMVKMWGDG). A helical transmembrane segment spans residues 54–74 (FWNLLAFGMQMALIIVTGHAL). Residues 75 to 102 (ASSAPVKSLLRTAASAAKTPVQGVMLVT) lie on the Periplasmic side of the membrane. The chain crosses the membrane as a helical span at residues 103–123 (FFGSVACVINWGFGLVVGAMF). The Cytoplasmic portion of the chain corresponds to 124–137 (AREVARRVPGSDYP). The next 2 helical transmembrane spans lie at 138-158 (LLIACAYIGFLTWGGGFSGSM) and 159-179 (PLLAATPGNPVEHIAGLIPVG). A topological domain (cytoplasmic) is located at residue Asp-180. The helical transmembrane segment at 181–201 (TLFSGFNIFITVALIVVMPFI) threads the bilayer. The Periplasmic segment spans residues 202–244 (TRMMMPKPSDVVSIDPKLLMEEADFQKQLPKDAPPSERLEESR). 2 consecutive transmembrane segments (helical) span residues 245 to 265 (ILTLIIGALGIAYLAMYFSEH) and 266 to 286 (GFNITINTVNLMFMIAGLLLH). Residues 287–313 (KTPMAYMRAISAAARSTAGILVQFPFY) are Periplasmic-facing. The helical transmembrane segment at 314-334 (AGIQLMMEHSGLGGLITEFFI) threads the bilayer. The Cytoplasmic portion of the chain corresponds to 335–351 (NVANKDTFPVMTFFSSA). The helical transmembrane segment at 352–372 (LINFAVPSGGGHWVIQGPFVI) threads the bilayer. At 373-394 (PAAQALGADLGKSVMAIAYGEQ) the chain is on the periplasmic side. The chain crosses the membrane as a helical span at residues 395–415 (WMNMAQPFWALPALAIAGLGV). Residues 416 to 419 (RDIM) lie on the Cytoplasmic side of the membrane. Residues 420 to 440 (GYCITALLFSGVIFVIGLTLF) traverse the membrane as a helical segment.

It localises to the cell inner membrane. Its function is as follows. May be responsible for the uptake of short-chain fatty acids. This Escherichia coli (strain K12) protein is Putative short-chain fatty acid transporter (atoE).